A 387-amino-acid polypeptide reads, in one-letter code: RNA polymerase II elongation factor ELL3 (387 aa).

Disordered stretches follow at residues 127 to 148 and 186 to 275; these read LTEG…EGHP and LSNR…EEVP. Positions 230–239 are enriched in polar residues; it reads SPLQGLSNQD. Phosphoserine is present on S240. The segment covering 240 to 251 has biased composition (acidic residues); that stretch reads SPEEQDWGQDAD. A compositionally biased stretch (low complexity) spans 257–271; sequence EQSLSVQSASESPSP. The OCEL domain maps to 275–385; the sequence is PDYLLQYSTI…LILEFEEKNR (111 aa).

This sequence belongs to the ELL/occludin family. In terms of assembly, interacts with AFF4. Component of the super elongation complex (SEC), at least composed of EAF1, EAF2, CDK9, MLLT3/AF9, AFF (AFF1 or AFF4), the P-TEFb complex and ELL (ELL, ELL2 or ELL3). Component of the little elongation complex (LEC), at least composed of ELL (ELL, ELL2 or ELL3), ZC3H8, ICE1 and ICE2.

It is found in the nucleus. Its function is as follows. Enhancer-binding elongation factor that specifically binds enhancers in embryonic stem cells (ES cells), marks them, and is required for their future activation during stem cell specification. Elongation factor component of the super elongation complex (SEC), a complex required to increase the catalytic rate of RNA polymerase II transcription by suppressing transient pausing by the polymerase at multiple sites along the DNA. Component of the little elongation complex (LEC), a complex required to regulate small nuclear RNA (snRNA) gene transcription by RNA polymerase II and III. Does not only bind to enhancer regions of active genes, but also marks the enhancers that are in a poised or inactive state in ES cells and is required for establishing proper RNA polymerase II occupancy at developmentally regulated genes in a cohesin-dependent manner. Probably required for priming developmentally regulated genes for later recruitment of the super elongation complex (SEC), for transcriptional activation during differentiation. Required for recruitment of P-TEFb within SEC during differentiation. Probably preloaded on germ cell chromatin, suggesting that it may prime gene activation by marking enhancers as early as in the germ cells. Promoting epithelial-mesenchymal transition (EMT). This chain is RNA polymerase II elongation factor ELL3 (Ell3), found in Rattus norvegicus (Rat).